The chain runs to 622 residues: Chaperone protein HscA homolog (622 aa).

The protein belongs to the heat shock protein 70 family.

Chaperone involved in the maturation of iron-sulfur cluster-containing proteins. Has a low intrinsic ATPase activity which is markedly stimulated by HscB. The chain is Chaperone protein HscA homolog from Burkholderia orbicola (strain MC0-3).